A 215-amino-acid chain; its full sequence is Ribonuclease T (215 aa).

The 175-residue stretch at 20-194 (VVIDVETAGF…YDTERTAVLF (175 aa)) folds into the Exonuclease domain. Mg(2+) is bound by residues D23, E25, H181, and D186. Catalysis depends on H181, which acts as the Proton donor/acceptor.

Belongs to the RNase T family. As to quaternary structure, homodimer. Requires Mg(2+) as cofactor.

Functionally, trims short 3' overhangs of a variety of RNA species, leaving a one or two nucleotide 3' overhang. Responsible for the end-turnover of tRNA: specifically removes the terminal AMP residue from uncharged tRNA (tRNA-C-C-A). Also appears to be involved in tRNA biosynthesis. In Citrobacter koseri (strain ATCC BAA-895 / CDC 4225-83 / SGSC4696), this protein is Ribonuclease T.